A 467-amino-acid chain; its full sequence is Histidine--tRNA ligase (467 aa).

It belongs to the class-II aminoacyl-tRNA synthetase family. Homodimer.

The protein resides in the cytoplasm. It carries out the reaction tRNA(His) + L-histidine + ATP = L-histidyl-tRNA(His) + AMP + diphosphate + H(+). The chain is Histidine--tRNA ligase from Gloeobacter violaceus (strain ATCC 29082 / PCC 7421).